We begin with the raw amino-acid sequence, 368 residues long: Putative zinc metalloprotease Cj1068 (368 aa).

Residue His-36 coordinates Zn(2+). The active site involves Glu-37. His-40 serves as a coordination point for Zn(2+). A run of 3 helical transmembrane segments spans residues Ile-112–Gly-134, Phe-291–Ile-313, and Thr-338–Asn-360. Residues Ala-126–Lys-197 form the PDZ domain.

The protein belongs to the peptidase M50B family. It depends on Zn(2+) as a cofactor.

Its subcellular location is the cell inner membrane. The protein is Putative zinc metalloprotease Cj1068 of Campylobacter jejuni subsp. jejuni serotype O:2 (strain ATCC 700819 / NCTC 11168).